The sequence spans 206 residues: MARYRGPVGKVSRRLGIGITDKGQRILAKRPFPPGQHGPSARRRQVSDYGLQLLEKQKARYVYGVLERQFRRIFEKAQRFPGETGAYLFILLERRLDNVVYRLGFATTRAQARQLVSHGHITVNGRKTNIPSYTVRVGETIAVRPESRRRTYFKNLIDSGALARHKTPDWLRLNPADLSGEVVAMPRREDAEPGINEQLIVEFYSR.

Positions 94–157 (RRLDNVVYRL…RRRTYFKNLI (64 aa)) constitute an S4 RNA-binding domain.

Belongs to the universal ribosomal protein uS4 family. As to quaternary structure, part of the 30S ribosomal subunit. Contacts protein S5. The interaction surface between S4 and S5 is involved in control of translational fidelity.

Its function is as follows. One of the primary rRNA binding proteins, it binds directly to 16S rRNA where it nucleates assembly of the body of the 30S subunit. Functionally, with S5 and S12 plays an important role in translational accuracy. The polypeptide is Small ribosomal subunit protein uS4 (Roseiflexus sp. (strain RS-1)).